The primary structure comprises 250 residues: C-X-C motif chemokine 16 (250 aa).

Residues 1–24 (MPLWELWFFLLALFLAWLTPPGNG) form the signal peptide. The Extracellular portion of the chain corresponds to 25–200 (NEGSMAGSCP…NVGATAGTSA (176 aa)). 2 cysteine pairs are disulfide-bonded: Cys33-Cys63 and Cys35-Cys77. Residues 105-186 (VAHQQHLAPQ…AKSEARENQE (82 aa)) form a disordered region. 2 stretches are compositionally biased toward polar residues: residues 128 to 147 (DSSTPAQTNLPSTLQPTQKP) and 163 to 172 (TSETDTSTVG). A helical membrane pass occupies residues 201-221 (LVPVLSLLVIIFLLTGVLLYV). At 222–250 (MCKKRQEQSRQYPPDPQLHYVPVASNINT) the chain is on the cytoplasmic side.

Belongs to the intercrine alpha (chemokine CxC) family. In terms of processing, glycosylated.

It is found in the membrane. Induces a strong chemotactic response. Induces calcium mobilization. Binds to CXCR6/Bonzo. Also acts as a scavenger receptor on macrophages, which specifically binds to OxLDL (oxidized low density lipoprotein), suggesting that it may be involved in pathophysiology such as atherogenesis. In Sus scrofa (Pig), this protein is C-X-C motif chemokine 16 (CXCL16).